A 300-amino-acid chain; its full sequence is tRNA-cytidine(32) 2-sulfurtransferase (300 aa).

Positions 57-62 (SGGKDS) match the PP-loop motif motif. The [4Fe-4S] cluster site is built by C132, C135, and C223.

Belongs to the TtcA family. Homodimer. Mg(2+) is required as a cofactor. The cofactor is [4Fe-4S] cluster.

It localises to the cytoplasm. It catalyses the reaction cytidine(32) in tRNA + S-sulfanyl-L-cysteinyl-[cysteine desulfurase] + AH2 + ATP = 2-thiocytidine(32) in tRNA + L-cysteinyl-[cysteine desulfurase] + A + AMP + diphosphate + H(+). It functions in the pathway tRNA modification. Functionally, catalyzes the ATP-dependent 2-thiolation of cytidine in position 32 of tRNA, to form 2-thiocytidine (s(2)C32). The sulfur atoms are provided by the cysteine/cysteine desulfurase (IscS) system. The chain is tRNA-cytidine(32) 2-sulfurtransferase from Xanthomonas campestris pv. campestris (strain B100).